Consider the following 150-residue polypeptide: Large ribosomal subunit protein bL9 (150 aa).

It belongs to the bacterial ribosomal protein bL9 family.

Binds to the 23S rRNA. This Pectobacterium carotovorum subsp. carotovorum (strain PC1) protein is Large ribosomal subunit protein bL9.